The following is a 487-amino-acid chain: MRLVREARPHGREKLRSNLMEWFHWLLREAEIYDVRYPVKGAYVWRPYGMKIRRNVEALIRRLHDETGHEEVLFPVFIPYEFFGKESEHIRGFEKEVFWVSKGGEGGERLVLRPTSETAIMPMVKLWVQDYKDLPLRLYQIVSVFRAETKMTHPMIRLREISMFKEAHTVHVDREDAERQVREAVEIYKRIFDEMCLAYMINRRPDWDKFAGAVYTIAFDTVLPDGRALQIGTVHYLGTKFTEVFEVTYLAPDGSRRLAHTTSYGISERSIAAMLITHGDDAGTVIPPKLAPIQVVVVPIFYGEEEKGVVMPAAEQAAKALREAGFRVHVDGRDDKTPGWKFYYWELRGVPLRVEVGKRDVEGRQVVVARRDTLAKYAVAVDELVDAVKALLSEVEANLRRRAVEELRGRIVRVETVEAARAAIREGKVVELPWSGDNDCGLKLQELVGADALGVPMDSEASVGGFDLRDPACGKRAEVWLRLAERY.

It belongs to the class-II aminoacyl-tRNA synthetase family. ProS type 3 subfamily. Homodimer.

It is found in the cytoplasm. The enzyme catalyses tRNA(Pro) + L-proline + ATP = L-prolyl-tRNA(Pro) + AMP + diphosphate. Catalyzes the attachment of proline to tRNA(Pro) in a two-step reaction: proline is first activated by ATP to form Pro-AMP and then transferred to the acceptor end of tRNA(Pro). This Pyrobaculum calidifontis (strain DSM 21063 / JCM 11548 / VA1) protein is Proline--tRNA ligase.